A 157-amino-acid polypeptide reads, in one-letter code: Phosphopantetheine adenylyltransferase (157 aa).

Position 10 (threonine 10) interacts with substrate. ATP contacts are provided by residues 10-11 and histidine 18; that span reads TF. 3 residues coordinate substrate: lysine 42, leucine 74, and arginine 88. Residues 89 to 91, glutamate 99, and 124 to 130 contribute to the ATP site; these read GLR and NAFISSS.

Belongs to the bacterial CoaD family. In terms of assembly, homohexamer. Requires Mg(2+) as cofactor.

It localises to the cytoplasm. The catalysed reaction is (R)-4'-phosphopantetheine + ATP + H(+) = 3'-dephospho-CoA + diphosphate. It functions in the pathway cofactor biosynthesis; coenzyme A biosynthesis; CoA from (R)-pantothenate: step 4/5. Functionally, reversibly transfers an adenylyl group from ATP to 4'-phosphopantetheine, yielding dephospho-CoA (dPCoA) and pyrophosphate. In Helicobacter acinonychis (strain Sheeba), this protein is Phosphopantetheine adenylyltransferase.